We begin with the raw amino-acid sequence, 214 residues long: MFGRRSMADPPAPPAIILAGGLAQRMGGGDKALRMVGGRTLLALVIDRLASQCDILALSANGDPARFADYDLPVIADPVDGFRGPLAGVLAGLDWVAEHRPAARWMLSTPADCPFLPRDLVARLHQARIDQQADIAVAASAGRSHPVIALWPVGLRIDLRRALLADDIRKVDRFTARYPRAMAEWPVEPADPFFNANTPQDLAEAEGLAMREPD.

GTP-binding positions include Leu18–Gly20, Lys31, Asp77, and Asp112. Residue Asp112 coordinates Mg(2+).

It belongs to the MobA family. Monomer. The cofactor is Mg(2+).

Its subcellular location is the cytoplasm. It carries out the reaction Mo-molybdopterin + GTP + H(+) = Mo-molybdopterin guanine dinucleotide + diphosphate. Transfers a GMP moiety from GTP to Mo-molybdopterin (Mo-MPT) cofactor (Moco or molybdenum cofactor) to form Mo-molybdopterin guanine dinucleotide (Mo-MGD) cofactor. The sequence is that of Molybdenum cofactor guanylyltransferase from Rhodopseudomonas palustris (strain HaA2).